We begin with the raw amino-acid sequence, 291 residues long: Secretory carrier-associated membrane protein 5 (291 aa).

Positions 1–10 (MGGRYDRNTF) are enriched in basic and acidic residues. The segment at 1–66 (MGGRYDRNTF…GSGAQDLKKK (66 aa)) is disordered. Over 1-126 (MGGRYDRNTF…EILVRLQRLQ (126 aa)) the chain is Cytoplasmic. A Phosphoserine modification is found at Ser34. Residues 58-94 (SGAQDLKKKEKELQAKEADLRRREQDLKRKQDAAARA) adopt a coiled-coil conformation. 4 consecutive transmembrane segments (helical) span residues 127-147 (YIAF…IIAV), 159-179 (IWLL…VLWY), 194-214 (FGWF…AAVA), and 242-262 (IFYF…IWVI). The Cytoplasmic segment spans residues 263 to 288 (QQVYMYFRGSGKADDMRRDAARGAMR).

Belongs to the SCAMP family.

It localises to the cell membrane. Its subcellular location is the cytoplasmic vesicle. It is found in the secretory vesicle membrane. Its function is as follows. Probably involved in membrane trafficking. The chain is Secretory carrier-associated membrane protein 5 (SCAMP5) from Arabidopsis thaliana (Mouse-ear cress).